The primary structure comprises 369 residues: Molybdenum import ATP-binding protein ModC (369 aa).

Positions 7–243 constitute an ABC transporter domain; the sequence is PGQAGIHARF…LDLPMAMTDD (237 aa). Position 41 to 48 (41 to 48) interacts with ATP; it reads GQSGSGKT. One can recognise a Mop domain in the interval 304–369; that stretch reads EGSILNVLAV…AQIKAVSLLA (66 aa).

It belongs to the ABC transporter superfamily. Molybdate importer (TC 3.A.1.8) family. The complex is composed of two ATP-binding proteins (ModC), two transmembrane proteins (ModB) and a solute-binding protein (ModA).

Its subcellular location is the cell inner membrane. The catalysed reaction is molybdate(out) + ATP + H2O = molybdate(in) + ADP + phosphate + H(+). Part of the ABC transporter complex ModABC involved in molybdenum import. Responsible for energy coupling to the transport system. The polypeptide is Molybdenum import ATP-binding protein ModC (Bordetella bronchiseptica (strain ATCC BAA-588 / NCTC 13252 / RB50) (Alcaligenes bronchisepticus)).